The following is a 1200-amino-acid chain: DNA polymerase subunit gamma-1 (1200 aa).

2 disordered regions span residues 471–515 (QKKT…RPSM) and 667–688 (MDLSSEVPATAKAKKRNNSSEH). Basic residues predominate over residues 472-481 (KKTKISKKQK). Residues 494–512 (LVEDHNEDPGPPTEKEESR) show a composition bias toward basic and acidic residues.

Belongs to the DNA polymerase type-A family. In terms of assembly, heterotrimer composed of a catalytic subunit and a homodimer of accessory subunits. Mg(2+) is required as a cofactor.

The protein resides in the mitochondrion. It localises to the mitochondrion matrix. Its subcellular location is the mitochondrion nucleoid. The catalysed reaction is DNA(n) + a 2'-deoxyribonucleoside 5'-triphosphate = DNA(n+1) + diphosphate. Functionally, involved in the replication of mitochondrial DNA. Associates with mitochondrial DNA. This is DNA polymerase subunit gamma-1 (polg) from Xenopus laevis (African clawed frog).